Consider the following 309-residue polypeptide: UDP-N-acetylenolpyruvoylglucosamine reductase (309 aa).

The region spanning 24-187 (RVGGPADWLF…TKAVFEAPRG (164 aa)) is the FAD-binding PCMH-type domain. The active site involves arginine 167. A compositionally biased stretch (basic and acidic residues) spans 200–213 (LARRDATQPTKERS). The disordered stretch occupies residues 200-230 (LARRDATQPTKERSAGSTFRNPAGFSSTGRS). Residues 214 to 228 (AGSTFRNPAGFSSTG) show a composition bias toward polar residues. Serine 216 (proton donor) is an active-site residue. Residue glutamate 298 is part of the active site.

It belongs to the MurB family. The cofactor is FAD.

It localises to the cytoplasm. It catalyses the reaction UDP-N-acetyl-alpha-D-muramate + NADP(+) = UDP-N-acetyl-3-O-(1-carboxyvinyl)-alpha-D-glucosamine + NADPH + H(+). It participates in cell wall biogenesis; peptidoglycan biosynthesis. Its function is as follows. Cell wall formation. The sequence is that of UDP-N-acetylenolpyruvoylglucosamine reductase from Roseobacter denitrificans (strain ATCC 33942 / OCh 114) (Erythrobacter sp. (strain OCh 114)).